Here is a 303-residue protein sequence, read N- to C-terminus: UDP-3-O-acyl-N-acetylglucosamine deacetylase (303 aa).

Positions 78, 237, and 241 each coordinate Zn(2+). H264 acts as the Proton donor in catalysis.

Belongs to the LpxC family. Zn(2+) serves as cofactor.

It catalyses the reaction a UDP-3-O-[(3R)-3-hydroxyacyl]-N-acetyl-alpha-D-glucosamine + H2O = a UDP-3-O-[(3R)-3-hydroxyacyl]-alpha-D-glucosamine + acetate. The protein operates within glycolipid biosynthesis; lipid IV(A) biosynthesis; lipid IV(A) from (3R)-3-hydroxytetradecanoyl-[acyl-carrier-protein] and UDP-N-acetyl-alpha-D-glucosamine: step 2/6. Catalyzes the hydrolysis of UDP-3-O-myristoyl-N-acetylglucosamine to form UDP-3-O-myristoylglucosamine and acetate, the committed step in lipid A biosynthesis. In Xanthomonas campestris pv. campestris (strain 8004), this protein is UDP-3-O-acyl-N-acetylglucosamine deacetylase.